A 326-amino-acid chain; its full sequence is Lipoyl synthase (326 aa).

The [4Fe-4S] cluster site is built by Cys56, Cys61, Cys67, Cys82, Cys86, Cys89, and Ser298. The region spanning 68–287 (WEDREATFLI…KDEADAIGYS (220 aa)) is the Radical SAM core domain.

Belongs to the radical SAM superfamily. Lipoyl synthase family. [4Fe-4S] cluster is required as a cofactor.

The protein localises to the cytoplasm. The catalysed reaction is [[Fe-S] cluster scaffold protein carrying a second [4Fe-4S](2+) cluster] + N(6)-octanoyl-L-lysyl-[protein] + 2 oxidized [2Fe-2S]-[ferredoxin] + 2 S-adenosyl-L-methionine + 4 H(+) = [[Fe-S] cluster scaffold protein] + N(6)-[(R)-dihydrolipoyl]-L-lysyl-[protein] + 4 Fe(3+) + 2 hydrogen sulfide + 2 5'-deoxyadenosine + 2 L-methionine + 2 reduced [2Fe-2S]-[ferredoxin]. It functions in the pathway protein modification; protein lipoylation via endogenous pathway; protein N(6)-(lipoyl)lysine from octanoyl-[acyl-carrier-protein]: step 2/2. Its function is as follows. Catalyzes the radical-mediated insertion of two sulfur atoms into the C-6 and C-8 positions of the octanoyl moiety bound to the lipoyl domains of lipoate-dependent enzymes, thereby converting the octanoylated domains into lipoylated derivatives. This is Lipoyl synthase from Streptomyces griseus subsp. griseus (strain JCM 4626 / CBS 651.72 / NBRC 13350 / KCC S-0626 / ISP 5235).